Here is a 310-residue protein sequence, read N- to C-terminus: Pantothenate kinase (310 aa).

ATP is bound at residue 95-102 (GSVAVGKS).

The protein belongs to the prokaryotic pantothenate kinase family.

The protein resides in the cytoplasm. The enzyme catalyses (R)-pantothenate + ATP = (R)-4'-phosphopantothenate + ADP + H(+). It functions in the pathway cofactor biosynthesis; coenzyme A biosynthesis; CoA from (R)-pantothenate: step 1/5. The sequence is that of Pantothenate kinase from Rhodococcus erythropolis (strain PR4 / NBRC 100887).